Consider the following 873-residue polypeptide: Leucine--tRNA ligase (873 aa).

Residues 48–58 (PYPSGKLHMGH) carry the 'HIGH' region motif. Positions 636–640 (KMSKS) match the 'KMSKS' region motif. Residue lysine 639 participates in ATP binding.

This sequence belongs to the class-I aminoacyl-tRNA synthetase family.

The protein resides in the cytoplasm. It catalyses the reaction tRNA(Leu) + L-leucine + ATP = L-leucyl-tRNA(Leu) + AMP + diphosphate. The chain is Leucine--tRNA ligase from Cupriavidus metallidurans (strain ATCC 43123 / DSM 2839 / NBRC 102507 / CH34) (Ralstonia metallidurans).